A 661-amino-acid chain; its full sequence is CD180 antigen (661 aa).

The N-terminal stretch at Met1–Ala20 is a signal peptide. The Extracellular portion of the chain corresponds to Thr21–Ser626. The 21-residue stretch at Val33–Asn53 folds into the LRRNT domain. N-linked (GlcNAc...) asparagine glycans are attached at residues Asn34, Asn53, Asn70, and Asn78. LRR repeat units follow at residues Ser54–Arg75, Asn78–Ser99, Arg102–Gly123, Ala126–Asn147, Thr150–Pro171, Lys174–Ser195, and Asn201–Ser221. N-linked (GlcNAc...) asparagine glycans are attached at residues Asn201, Asn244, and Asn288. 5 LRR repeats span residues Ser275–Cys296, Gly299–Ser321, Thr322–Asn343, Ser346–Leu366, and Asn371–Gln391. Asn394 and Asn402 each carry an N-linked (GlcNAc...) asparagine glycan. LRR repeat units lie at residues His397–Glu418, Gln421–Gln442, Leu446–Asp466, Ala470–Gln493, Arg497–Ser518, Met521–Lys544, and Ile546–Leu566. N-linked (GlcNAc...) asparagine glycosylation occurs at Asn451. The LRRCT domain occupies Asn577–Met627. Residues Met627–Val650 form a helical membrane-spanning segment. Residues Lys651–Ile661 lie on the Cytoplasmic side of the membrane.

Belongs to the Toll-like receptor family. M-shaped tetramer of two CD180-LY86 heterodimers. As to expression, B-lymphocytes and spleen. Not detected in thymus, kidney, muscle, heart, brain or liver.

Its subcellular location is the cell membrane. May cooperate with MD-1 and TLR4 to mediate the innate immune response to bacterial lipopolysaccharide (LPS) in B-cells. Leads to NF-kappa-B activation. Also involved in the life/death decision of B-cells. In Mus musculus (Mouse), this protein is CD180 antigen (Cd180).